The following is a 262-amino-acid chain: 2-keto-4-pentenoate hydratase 2 (262 aa).

Belongs to the hydratase/decarboxylase family. MhpD subfamily. Requires a divalent metal cation as cofactor.

The catalysed reaction is (S)-4-hydroxy-2-oxopentanoate = (2Z)-2-hydroxypenta-2,4-dienoate + H2O. It functions in the pathway aromatic compound metabolism; 3-phenylpropanoate degradation. In terms of biological role, catalyzes the conversion of 2-hydroxypentadienoic acid (enolic form of 2-oxopent-4-enoate) to 4-hydroxy-2-ketopentanoic acid. The polypeptide is 2-keto-4-pentenoate hydratase 2 (Dechloromonas aromatica (strain RCB)).